We begin with the raw amino-acid sequence, 240 residues long: 4-hydroxy-tetrahydrodipicolinate reductase (240 aa).

NAD(+)-binding positions include 79 to 81 and 103 to 106; these read ATT and SANM. The active-site Proton donor/acceptor is the His-135. His-136 lines the (S)-2,3,4,5-tetrahydrodipicolinate pocket. Lys-139 serves as the catalytic Proton donor. A (S)-2,3,4,5-tetrahydrodipicolinate-binding site is contributed by 145–146; it reads GT.

This sequence belongs to the DapB family.

The protein localises to the cytoplasm. It catalyses the reaction (S)-2,3,4,5-tetrahydrodipicolinate + NAD(+) + H2O = (2S,4S)-4-hydroxy-2,3,4,5-tetrahydrodipicolinate + NADH + H(+). The catalysed reaction is (S)-2,3,4,5-tetrahydrodipicolinate + NADP(+) + H2O = (2S,4S)-4-hydroxy-2,3,4,5-tetrahydrodipicolinate + NADPH + H(+). It participates in amino-acid biosynthesis; L-lysine biosynthesis via DAP pathway; (S)-tetrahydrodipicolinate from L-aspartate: step 4/4. Its function is as follows. Catalyzes the conversion of 4-hydroxy-tetrahydrodipicolinate (HTPA) to tetrahydrodipicolinate. This chain is 4-hydroxy-tetrahydrodipicolinate reductase, found in Staphylococcus aureus (strain MSSA476).